Reading from the N-terminus, the 206-residue chain is Large ribosomal subunit protein uL4 (206 aa).

This sequence belongs to the universal ribosomal protein uL4 family. In terms of assembly, part of the 50S ribosomal subunit.

Its function is as follows. One of the primary rRNA binding proteins, this protein initially binds near the 5'-end of the 23S rRNA. It is important during the early stages of 50S assembly. It makes multiple contacts with different domains of the 23S rRNA in the assembled 50S subunit and ribosome. Functionally, forms part of the polypeptide exit tunnel. In Desulfatibacillum aliphaticivorans, this protein is Large ribosomal subunit protein uL4.